The chain runs to 139 residues: MATMQCDVVSVKESIYSGAVTMLIAKGAGGELGILPGHAPLVTLLQPGPIRVLLENGTEEIVYVSGGVLEVQPHVVTVLADTAIRADNLDEAAILEARKNAEQLLANQKSDLDSAAALAALAETAAQLETIRKIKNRAQ.

The protein belongs to the ATPase epsilon chain family. As to quaternary structure, F-type ATPases have 2 components, CF(1) - the catalytic core - and CF(0) - the membrane proton channel. CF(1) has five subunits: alpha(3), beta(3), gamma(1), delta(1), epsilon(1). CF(0) has three main subunits: a, b and c.

It is found in the cell inner membrane. Its function is as follows. Produces ATP from ADP in the presence of a proton gradient across the membrane. This is ATP synthase epsilon chain from Acinetobacter baumannii (strain AB307-0294).